Here is a 100-residue protein sequence, read N- to C-terminus: Urease subunit gamma (100 aa).

Belongs to the urease gamma subunit family. Heterotrimer of UreA (gamma), UreB (beta) and UreC (alpha) subunits. Three heterotrimers associate to form the active enzyme.

The protein localises to the cytoplasm. It carries out the reaction urea + 2 H2O + H(+) = hydrogencarbonate + 2 NH4(+). Its pathway is nitrogen metabolism; urea degradation; CO(2) and NH(3) from urea (urease route): step 1/1. The chain is Urease subunit gamma from Bordetella bronchiseptica (strain ATCC BAA-588 / NCTC 13252 / RB50) (Alcaligenes bronchisepticus).